The primary structure comprises 623 residues: Peptide transporter PTR2 (623 aa).

Disordered regions lie at residues M1–D20 and D31–E58. Helical transmembrane passes span A134–G154, A163–I183, N191–M211, I250–Y270, F277–I297, I385–M405, F418–L438, I448–L468, L499–Y519, L529–T549, and L557–A577.

Belongs to the major facilitator superfamily. Proton-dependent oligopeptide transporter (POT/PTR) (TC 2.A.17) family.

Its subcellular location is the membrane. Its function is as follows. Uptake of small peptides. The chain is Peptide transporter PTR2 (PTR2) from Candida albicans (Yeast).